Here is an 86-residue protein sequence, read N- to C-terminus: U15-lycotoxin-Ls1d (86 aa).

The first 20 residues, Met-1 to Ser-20, serve as a signal peptide directing secretion. The WAP domain maps to Asp-21 to Thr-66. Intrachain disulfides connect Cys-24–Cys-54, Cys-32–Cys-58, Cys-41–Cys-53, Cys-42–Cys-80, and Cys-47–Cys-62.

Belongs to the venom protein 11 family. 01 (wap-1) subfamily. In terms of processing, contains 5 disulfide bonds. Expressed by the venom gland.

The protein localises to the secreted. Has antibacterial activity. The sequence is that of U15-lycotoxin-Ls1d from Lycosa singoriensis (Wolf spider).